Reading from the N-terminus, the 175-residue chain is Shikimate kinase (175 aa).

Residue 14-19 (GAGKST) coordinates ATP. Serine 18 is a Mg(2+) binding site. The substrate site is built by aspartate 36, arginine 60, and glycine 82. Arginine 120 serves as a coordination point for ATP. Arginine 140 is a substrate binding site. Glutamine 157 is a binding site for ATP.

Belongs to the shikimate kinase family. Monomer. It depends on Mg(2+) as a cofactor.

The protein resides in the cytoplasm. The catalysed reaction is shikimate + ATP = 3-phosphoshikimate + ADP + H(+). Its pathway is metabolic intermediate biosynthesis; chorismate biosynthesis; chorismate from D-erythrose 4-phosphate and phosphoenolpyruvate: step 5/7. Its function is as follows. Catalyzes the specific phosphorylation of the 3-hydroxyl group of shikimic acid using ATP as a cosubstrate. The protein is Shikimate kinase of Pasteurella multocida (strain Pm70).